Consider the following 377-residue polypeptide: tRNA pseudouridine synthase B (377 aa).

The Nucleophile role is filled by Asp-53.

Belongs to the pseudouridine synthase TruB family. Type 1 subfamily.

It carries out the reaction uridine(55) in tRNA = pseudouridine(55) in tRNA. In terms of biological role, responsible for synthesis of pseudouridine from uracil-55 in the psi GC loop of transfer RNAs. This is tRNA pseudouridine synthase B from Tropheryma whipplei (strain Twist) (Whipple's bacillus).